We begin with the raw amino-acid sequence, 32 residues long: Photosystem I reaction center subunit XII (32 aa).

The chain crosses the membrane as a helical span at residues 3 to 23 (SISDGQIVVALISAFIIVILA).

This sequence belongs to the PsaM family.

The protein resides in the plastid. It localises to the chloroplast thylakoid membrane. In Anthoceros angustus (Hornwort), this protein is Photosystem I reaction center subunit XII.